A 573-amino-acid polypeptide reads, in one-letter code: MIPRNLISGLFLLPFVVAELNIYGYLDLKTLADGFHTTTACIAALNQTVDCDARTAVAAAVADTYYWTLDNVTTLCTSQCQQSLTSWTSAVDAACGNRPIVEDGIVKLASSTPLTYKEGFDLVCLKSGDSWCMIESQEWEGSDILKYPTDYCSTGDPEYDGPECFEKGFDQLAIEAGDERMTSLYEKDLLCSDCFLKVFRQRLLSPFLLKGGYTSYLVEQFQDMQSYCSTSMPYATSTSEVFMGTATRTMPTGSPPPTTTCGGPTIQPTDPPLSCEAITDKYNVTTGDSHSDLHGEFSLASKPRFLKANAIDRQHEPIEKLDHAICYAGTSEPPGGSYESQPPVHQPTGASEYYTTAIPPAPTSTGTTPSCGRYYEVVAGDQCNTIALHFGITVDAFLSLNTQIDERCSNLWIAYAYCVAPVDIVDQPMTIVDQDIATQGNVLPATELPSPRMGRVVLNIMIGSVVTQLLENAALSMDIAGVRRTSAQQGIVIRVPVIQTLAKRVLTVRADQALQETKHVPALNLAHVATWRDIVEMEPTTAHPGDAILERAKGPRIHSIALYVTVLYLDLWI.

The N-terminal stretch at 1–18 (MIPRNLISGLFLLPFVVA) is a signal peptide. N-linked (GlcNAc...) asparagine glycans are attached at residues N46, N71, and N283. The LysM domain maps to 373 to 419 (RYYEVVAGDQCNTIALHFGITVDAFLSLNTQIDERCSNLWIAYAYCV). Residues 375–405 (YEVVAGDQCNTIALHFGITVDAFLSLNTQID) form a lysM domain region.

Its subcellular location is the secreted. In terms of biological role, might have a role in sequestration of chitin oligosaccharides (breakdown products of fungal cell walls that are released during invasion and act as triggers of host immunity) to dampen host defense. This chain is LysM domain-containing protein ARB_01155/01156, found in Arthroderma benhamiae (strain ATCC MYA-4681 / CBS 112371) (Trichophyton mentagrophytes).